The chain runs to 146 residues: uncharacterized protein (146 aa).

This is an uncharacterized protein from Escherichia coli (strain K12).